A 284-amino-acid polypeptide reads, in one-letter code: Ribosome-associated protein oga1 (284 aa).

Residues 1–284 (MSVASKNLFD…LSETDFPALA (284 aa)) are disordered. The segment covering 22 to 36 (TEKKTAASRDKKRSD) has biased composition (basic and acidic residues). 2 positions are modified to phosphoserine: S37 and S51. Basic and acidic residues-rich tracts occupy residues 52–73 (RKRD…ADQP) and 119–141 (GREF…ERGW). T160 bears the Phosphothreonine mark. S162 carries the phosphoserine modification. A Phosphothreonine modification is found at T166. 2 stretches are compositionally biased toward basic and acidic residues: residues 172–186 (ENVK…ERKS) and 194–209 (TVEK…KSAP). Low complexity predominate over residues 214–224 (ASLKKSASQKK). Positions 226-237 (AAKESKPKKVLL) are enriched in basic and acidic residues. Residues 245–254 (ARPARGGRPN) show a composition bias toward low complexity. A compositionally biased stretch (polar residues) spans 263–277 (ETASKTQQAPPTLSE).

Belongs to the STM1 family. As to quaternary structure, associates with mature 80S ribosomes. Binds to the head domain of the 40S ribosomal subunit and prevents mRNA binding by inserting its alpha-helix domain towards the mRNA entry tunnel at the decoding site, where it blocks the binding of tRNA and mRNA at the A- and P-sites. Interacts with eEF2; interaction sequesters eEF2 at the A-site of the ribosome, thereby blocking the interaction sites of the mRNA-tRNA complex, promoting ribosome stabilization and hibernation. Interacts with sad1. In terms of processing, phosphorylation by TORC1 upon nutrient replenishment inhibits STM1 and causes its release from dormant ribosomes.

It is found in the cytoplasm. Ribosome preservation factor that protect a small pool of nontranslating, vacant ribosomes in cells under nutrient starvation conditions. Under nutrient-limiting conditions, cells reduce ribosome biogenesis and degrade ribosomes via autophagy (ribophagy) or proteasomal degradation. To avoid excessive degradation during starvation, STM1 binds to and protects 80S ribosomes from proteasomal degradation. Under nutrient-sufficient conditions, TORC1 phosphorylates and inhibits STM1 to prevent formation of dormant 80S ribosomes. Acts as an inhibitor of mRNA translation by promoting ribosome hibernation: clamps the two ribosomal subunits, thereby preventing their dissociation, and inhibits translation by excluding mRNA-binding. Acts via its association with eEF2, promoting ribosome stabilization and storage in an inactive state. May also repress translation by preventing association of eEF3 with ribosomes. Binds specifically G4 quadruplex (these are four-stranded right-handed helices, stabilized by guanine base quartets) and purine motif triplex (characterized by a third, antiparallel purine-rich DNA strand located within the major groove of a homopurine stretch of duplex DNA) nucleic acid structures. These structures may be present at telomeres or in rRNAs. Extends chronological lifespan when overexpressed. The chain is Ribosome-associated protein oga1 from Schizosaccharomyces pombe (strain 972 / ATCC 24843) (Fission yeast).